Reading from the N-terminus, the 676-residue chain is Translation initiation factor IF-2, mitochondrial (676 aa).

One can recognise a tr-type G domain in the interval 143–326 (KRAPVVTIMG…MDIRAENSPK (184 aa)). Positions 152–159 (GHVDHGKT) are G1. 152–159 (GHVDHGKT) contributes to the GTP binding site. Residues 177 to 181 (GITQH) form a G2 region. GTP-binding positions include 200–203 (DTPG) and 254–257 (TKID). Residues 200–203 (DTPG) form a G3 region. The G4 stretch occupies residues 254 to 257 (TKID). A G5 region spans residues 296 to 298 (SAK).

This sequence belongs to the TRAFAC class translation factor GTPase superfamily. Classic translation factor GTPase family. IF-2 subfamily.

The protein localises to the mitochondrion. Its function is as follows. One of the essential components for the initiation of protein synthesis. Protects formylmethionyl-tRNA from spontaneous hydrolysis and promotes its binding to the 30S ribosomal subunits. Also involved in the hydrolysis of GTP during the formation of the 70S ribosomal complex. This Saccharomyces cerevisiae (strain ATCC 204508 / S288c) (Baker's yeast) protein is Translation initiation factor IF-2, mitochondrial (IFM1).